An 84-amino-acid polypeptide reads, in one-letter code: Envelope glycoprotein N (84 aa).

A signal peptide spans 1 to 26 (MSCKKGARQRLYVSLWLFYILVFAAA). At 27-45 (TEMDFYSSECHSHTYEIVL) the chain is on the virion surface side. Residues 46–66 (NSFSSIWLLINLFLLLCSFAI) traverse the membrane as a helical segment. Topologically, residues 67–84 (FLKYWCYKTFASETVKGY) are intravirion.

It belongs to the herpesviridae glycoprotein N family. Interacts (via N-terminus) with gM (via N-terminus). The gM-gN heterodimer forms the gCII complex.

The protein localises to the virion membrane. It is found in the host membrane. The protein resides in the host Golgi apparatus. Its subcellular location is the host trans-Golgi network. Its function is as follows. Envelope glycoprotein necessary for proper maturation of gM and modulation of its membrane fusion activity. Also plays a critical role in virion morphogenesis. The chain is Envelope glycoprotein N from Human herpesvirus 6B (strain Z29) (HHV-6 variant B).